A 78-amino-acid polypeptide reads, in one-letter code: Large ribosomal subunit protein bL28 (78 aa).

This sequence belongs to the bacterial ribosomal protein bL28 family.

The polypeptide is Large ribosomal subunit protein bL28 (Prochlorococcus marinus (strain SARG / CCMP1375 / SS120)).